The primary structure comprises 979 residues: Translation initiation factor IF-2 (979 aa).

Residues 50-77 (LKRSHGQSDDSARKKITLTKRETSEIRQ) are compositionally biased toward basic and acidic residues. The segment at 50 to 385 (LKRSHGQSDD…GKHNADDARS (336 aa)) is disordered. Polar residues predominate over residues 78–87 (SDSTGKTRTV). 3 stretches are compositionally biased toward basic and acidic residues: residues 98-109 (IKRDDVESHGDG), 121-142 (EEVR…RQEA), and 149-173 (EAAE…RRQA). Residues 174 to 192 (ELLAQKAAEEAAAAQAAAD) are compositionally biased toward low complexity. 3 stretches are compositionally biased toward basic and acidic residues: residues 196–211 (ETAR…RLAT), 219–263 (NADD…EAEA), and 280–291 (PSERKAEEKKAE). Low complexity predominate over residues 317–327 (APAATTTTAAA). Over residues 351–368 (GGGLKTRGDSSGGVGGWR) the composition is skewed to gly residues. Residues 479 to 646 (PRPPVVTVMG…NVLLQAEVLE (168 aa)) form the tr-type G domain. The tract at residues 488-495 (GHVDHGKT) is G1. 488-495 (GHVDHGKT) contributes to the GTP binding site. The interval 513 to 517 (GITQH) is G2. The tract at residues 534 to 537 (DTPG) is G3. GTP is bound by residues 534–538 (DTPGH) and 588–591 (TKVD). The G4 stretch occupies residues 588–591 (TKVD). The tract at residues 624–626 (SAK) is G5.

The protein belongs to the TRAFAC class translation factor GTPase superfamily. Classic translation factor GTPase family. IF-2 subfamily.

The protein localises to the cytoplasm. Its function is as follows. One of the essential components for the initiation of protein synthesis. Protects formylmethionyl-tRNA from spontaneous hydrolysis and promotes its binding to the 30S ribosomal subunits. Also involved in the hydrolysis of GTP during the formation of the 70S ribosomal complex. The sequence is that of Translation initiation factor IF-2 from Cupriavidus metallidurans (strain ATCC 43123 / DSM 2839 / NBRC 102507 / CH34) (Ralstonia metallidurans).